Consider the following 418-residue polypeptide: UDP-N-acetylglucosamine 1-carboxyvinyltransferase (418 aa).

22 to 23 (KN) lines the phosphoenolpyruvate pocket. Arginine 92 is a binding site for UDP-N-acetyl-alpha-D-glucosamine. The active-site Proton donor is cysteine 116. 2-(S-cysteinyl)pyruvic acid O-phosphothioketal is present on cysteine 116. UDP-N-acetyl-alpha-D-glucosamine-binding positions include 121–125 (RPVDQ), aspartate 306, and isoleucine 328.

This sequence belongs to the EPSP synthase family. MurA subfamily.

It localises to the cytoplasm. It carries out the reaction phosphoenolpyruvate + UDP-N-acetyl-alpha-D-glucosamine = UDP-N-acetyl-3-O-(1-carboxyvinyl)-alpha-D-glucosamine + phosphate. The protein operates within cell wall biogenesis; peptidoglycan biosynthesis. Cell wall formation. Adds enolpyruvyl to UDP-N-acetylglucosamine. The protein is UDP-N-acetylglucosamine 1-carboxyvinyltransferase of Acinetobacter baylyi (strain ATCC 33305 / BD413 / ADP1).